We begin with the raw amino-acid sequence, 339 residues long: MTERISLTRYLVEQQRVHGRIPPQLRLLVEVVARACKRISFAVNKGDLGDVMGTAGTENVQGEVQKKLDIIANEVLIEANEWGGHLAAMASEEMDGIYVVPNRFPQGEHLLMFDPLDGSSNIDVNVSIGTIFSVLHKHHDDPTTDEPVTEADFLQPGHQQVAAGYCIYGPQTTLVLTVGDGVAMFTLDREQGSFVLTRENIRIPEDTKEFAINMSNMRHWDAPVRRYIDECLQGKEGPRGKDFNMRWIASMVADVHRILMRGGIFMYPWDKREPNKPGKLRLMYEANPMGWLVEQAGGAATNGRQRILDIQPAQLHERVSVILGSKNEVDRVTSYHSGI.

The Mg(2+) site is built by Glu-92, Asp-114, Leu-116, and Asp-117. Residues 117-120, Asn-213, and Lys-279 contribute to the substrate site; that span reads DGSS. Glu-285 lines the Mg(2+) pocket.

This sequence belongs to the FBPase class 1 family. Homotetramer. Requires Mg(2+) as cofactor.

The protein localises to the cytoplasm. The catalysed reaction is beta-D-fructose 1,6-bisphosphate + H2O = beta-D-fructose 6-phosphate + phosphate. It functions in the pathway carbohydrate biosynthesis; gluconeogenesis. This is Fructose-1,6-bisphosphatase class 1 from Acidovorax sp. (strain JS42).